The primary structure comprises 316 residues: Olfactory receptor 5AP2 (316 aa).

The Extracellular segment spans residues 1-34 (MRLMKEVRGRNQTEVTEFLLLGLSDNPDLQGVLF). N-linked (GlcNAc...) asparagine glycosylation occurs at asparagine 11. A helical membrane pass occupies residues 35–55 (ALFLLIYMANMVGNLGMIVLI). Residue lysine 56 is a topological domain, cytoplasmic. Residues 57–77 (IDLCLHTPMYFFLSSLSFVDA) traverse the membrane as a helical segment. Over 78–104 (SYSSSVTPKMLVNLMAENKAISFHGCA) the chain is Extracellular. A disulfide bridge connects residues cysteine 103 and cysteine 195. A helical transmembrane segment spans residues 105–125 (AQFYFFGSFLGTECFLLAMMA). Topologically, residues 126–135 (YDRYAAIWNP) are cytoplasmic. Residues 136–156 (LLYPVLVSGRICFLLIATSFL) form a helical membrane-spanning segment. Topologically, residues 157-210 (AGCGNAAIHTGMTFRLSFCGSNRINHFYCDTPPLLKLSCSDTHFNGIVIMAFSS) are extracellular. Residues 211-231 (FIVISCVMIVLISYLCIFIAV) traverse the membrane as a helical segment. Residues 232–245 (LKMPSLEGRHKAFS) lie on the Cytoplasmic side of the membrane. The chain crosses the membrane as a helical span at residues 246–266 (TCASYLMAVTIFFGTILFMYL). At 267–278 (RPTSSYSMEQDK) the chain is on the extracellular side. A helical membrane pass occupies residues 279-299 (VVSVFYTVIIPVLNPLIYSLK). At 300–316 (NKDVKKALKKILWKHIL) the chain is on the cytoplasmic side.

The protein belongs to the G-protein coupled receptor 1 family.

It localises to the cell membrane. In terms of biological role, odorant receptor. In Homo sapiens (Human), this protein is Olfactory receptor 5AP2.